Consider the following 364-residue polypeptide: MKKAILMMTFGSPEEITFEGVADFFTNIRRGVRPQDHEIQTLYDNYVRIGGTPLQKITHQEVALVEARLGNEYSVYFANKFSSPFIPDVIGQMEADGIEQCICLILEPHYSFYSVMGYEKFLESKQIQFLVIKDWYQEEALLNYWADEIAKILKEEVKQDSFKIIFSAHSVPIFALDFGDPYIDQIFENSKLVVEKLGLSSEQYTNTWQSESDIGIPWIKPDVLEYLREQTAHPDHYIFVPISFISEHIEVLFDNDVECYDLCQEFGVNYHRPPMPNTDSRLIDALVNTVRVNENQEFKEFLPEEETFDELVPSDETKNILAESEDLQMPEFVKKLIEKKGRENVKMPYLIKKMLEKAGKLPKE.

Fe-coproporphyrin III contacts are provided by arginine 29 and tyrosine 118. Fe(2+)-binding residues include histidine 169 and glutamate 250.

The protein belongs to the ferrochelatase family.

The protein localises to the cytoplasm. The enzyme catalyses Fe-coproporphyrin III + 2 H(+) = coproporphyrin III + Fe(2+). It functions in the pathway porphyrin-containing compound metabolism; protoheme biosynthesis. Its function is as follows. Involved in coproporphyrin-dependent heme b biosynthesis. Catalyzes the insertion of ferrous iron into coproporphyrin III to form Fe-coproporphyrin III. This is Coproporphyrin III ferrochelatase from Streptococcus pneumoniae (strain 70585).